Reading from the N-terminus, the 299-residue chain is ATP synthase gamma chain (299 aa).

It belongs to the ATPase gamma chain family. In terms of assembly, F-type ATPases have 2 components, CF(1) - the catalytic core - and CF(0) - the membrane proton channel. CF(1) has five subunits: alpha(3), beta(3), gamma(1), delta(1), epsilon(1). CF(0) has three main subunits: a, b and c.

Its subcellular location is the cell membrane. In terms of biological role, produces ATP from ADP in the presence of a proton gradient across the membrane. The gamma chain is believed to be important in regulating ATPase activity and the flow of protons through the CF(0) complex. The polypeptide is ATP synthase gamma chain (Clavibacter sepedonicus (Clavibacter michiganensis subsp. sepedonicus)).